We begin with the raw amino-acid sequence, 200 residues long: MKIILATSNKHKVLELKEILKDFEIYAFDEVLMPFEIEENGKTFKENALIKARAVFNALDEKQKKDFIALSDDSGICVDVLEGNPGIYSARFSGKGDDKSNRDKLVNEMIKKGFKQSKAYYVAAIAMVGLMGEFSTHGTMHGKVIDTEKGENGFGYDSLFIPKGFDKTLAQLSVDEKNNISHRFKALELAKIILKILNKG.

Residue 7-12 coordinates substrate; that stretch reads TSNKHK. 2 residues coordinate Mg(2+): E38 and D73. The Proton acceptor role is filled by D73. Substrate-binding positions include S74, 154–157, K177, and 182–183; these read FGYD and HR.

It belongs to the HAM1 NTPase family. Homodimer. Mg(2+) serves as cofactor.

The catalysed reaction is XTP + H2O = XMP + diphosphate + H(+). It catalyses the reaction dITP + H2O = dIMP + diphosphate + H(+). The enzyme catalyses ITP + H2O = IMP + diphosphate + H(+). Pyrophosphatase that catalyzes the hydrolysis of nucleoside triphosphates to their monophosphate derivatives, with a high preference for the non-canonical purine nucleotides XTP (xanthosine triphosphate), dITP (deoxyinosine triphosphate) and ITP. Seems to function as a house-cleaning enzyme that removes non-canonical purine nucleotides from the nucleotide pool, thus preventing their incorporation into DNA/RNA and avoiding chromosomal lesions. The chain is dITP/XTP pyrophosphatase from Campylobacter jejuni subsp. jejuni serotype O:2 (strain ATCC 700819 / NCTC 11168).